The sequence spans 1420 residues: DNA-directed RNA polymerase subunit beta' (1420 aa).

The Zn(2+) site is built by Cys-71, Cys-73, Cys-86, and Cys-89. Mg(2+) contacts are provided by Asp-461, Asp-463, and Asp-465. Cys-815, Cys-889, Cys-896, and Cys-899 together coordinate Zn(2+).

Belongs to the RNA polymerase beta' chain family. In terms of assembly, the RNAP catalytic core consists of 2 alpha, 1 beta, 1 beta' and 1 omega subunit. When a sigma factor is associated with the core the holoenzyme is formed, which can initiate transcription. Mg(2+) is required as a cofactor. Requires Zn(2+) as cofactor.

The enzyme catalyses RNA(n) + a ribonucleoside 5'-triphosphate = RNA(n+1) + diphosphate. In terms of biological role, DNA-dependent RNA polymerase catalyzes the transcription of DNA into RNA using the four ribonucleoside triphosphates as substrates. The protein is DNA-directed RNA polymerase subunit beta' of Histophilus somni (strain 2336) (Haemophilus somnus).